Reading from the N-terminus, the 469-residue chain is Interstitial collagenase (469 aa).

The signal sequence occupies residues 1–18 (MPRLPLLLLLLWGTGSHG). A propeptide spans 19-99 (FPAATSETQE…PRCGVPDVAP (81 aa)) (activation peptide). Positions 90–97 (PRCGVPDV) match the Cysteine switch motif. Residue C92 coordinates Zn(2+). N120 is a glycosylation site (N-linked (GlcNAc...) asparagine). Ca(2+)-binding residues include D124 and D158. Zn(2+)-binding residues include H168 and D170. The Ca(2+) site is built by D175, G176, G178, and N180. H183 lines the Zn(2+) pocket. Residues G190, G192, and D194 each contribute to the Ca(2+) site. H196 contributes to the Zn(2+) binding site. Residues D198, D199, and E201 each contribute to the Ca(2+) site. H218 is a Zn(2+) binding site. The active site involves E219. Positions 222 and 228 each coordinate Zn(2+). T274 carries the phosphothreonine modification. 4 Hemopexin repeats span residues 275–324 (PEVC…WPQL), 325–371 (PNGL…FGFP), 374–422 (VKSI…FPGI), and 423–466 (GNKV…WFNC). C278 and C466 form a disulfide bridge. D285 and Q329 together coordinate Ca(2+). At Y360 the chain carries Phosphotyrosine; by PKDCC. Residues D378 and D427 each contribute to the Ca(2+) site.

The protein belongs to the peptidase M10A family. Requires Ca(2+) as cofactor. Zn(2+) serves as cofactor. Tyrosine phosphorylated in platelets by PKDCC/VLK.

Its subcellular location is the secreted. The protein resides in the extracellular space. The protein localises to the extracellular matrix. The enzyme catalyses Cleavage of the triple helix of collagen at about three-quarters of the length of the molecule from the N-terminus, at 775-Gly-|-Ile-776 in the alpha1(I) chain. Cleaves synthetic substrates and alpha-macroglobulins at bonds where P1' is a hydrophobic residue.. Its activity is regulated as follows. Can be activated without removal of the activation peptide. In terms of biological role, cleaves collagens of types I, II, and III at one site in the helical domain. Also cleaves collagens of types VII and X. The sequence is that of Interstitial collagenase (MMP1) from Bos taurus (Bovine).